Consider the following 180-residue polypeptide: Crossover junction endodeoxyribonuclease RuvC (180 aa).

Active-site residues include Asp7, Glu66, and Asp138. 3 residues coordinate Mg(2+): Asp7, Glu66, and Asp138.

It belongs to the RuvC family. Homodimer which binds Holliday junction (HJ) DNA. The HJ becomes 2-fold symmetrical on binding to RuvC with unstacked arms; it has a different conformation from HJ DNA in complex with RuvA. In the full resolvosome a probable DNA-RuvA(4)-RuvB(12)-RuvC(2) complex forms which resolves the HJ. Mg(2+) is required as a cofactor.

The protein resides in the cytoplasm. It catalyses the reaction Endonucleolytic cleavage at a junction such as a reciprocal single-stranded crossover between two homologous DNA duplexes (Holliday junction).. The RuvA-RuvB-RuvC complex processes Holliday junction (HJ) DNA during genetic recombination and DNA repair. Endonuclease that resolves HJ intermediates. Cleaves cruciform DNA by making single-stranded nicks across the HJ at symmetrical positions within the homologous arms, yielding a 5'-phosphate and a 3'-hydroxyl group; requires a central core of homology in the junction. The consensus cleavage sequence is 5'-(A/T)TT(C/G)-3'. Cleavage occurs on the 3'-side of the TT dinucleotide at the point of strand exchange. HJ branch migration catalyzed by RuvA-RuvB allows RuvC to scan DNA until it finds its consensus sequence, where it cleaves and resolves the cruciform DNA. This chain is Crossover junction endodeoxyribonuclease RuvC, found in Burkholderia lata (strain ATCC 17760 / DSM 23089 / LMG 22485 / NCIMB 9086 / R18194 / 383).